Here is a 421-residue protein sequence, read N- to C-terminus: BEN domain-containing protein 5 (421 aa).

N6-acetyllysine is present on lysine 133. Positions 180–243 form a coiled coil; the sequence is RALYEELLRN…LNRRLQDVLL (64 aa). A Glycyl lysine isopeptide (Lys-Gly) (interchain with G-Cter in SUMO2) cross-link involves residue lysine 258. One can recognise a BEN domain in the interval 302 to 408; sequence GSGIWVDEEK…EKIMDINKSC (107 aa).

Functionally, acts as a transcriptional repressor. This Homo sapiens (Human) protein is BEN domain-containing protein 5 (BEND5).